Here is a 347-residue protein sequence, read N- to C-terminus: MDNKLGLEIIEVVEQAAIAAARWMGKGDNKTADQVAVEAMREKLNQIPMRGRIVIGEGTRDEAPMLYIGEEVGICTRPDAEQFCRVEELVEIDIAVDPCEGTNLVAKGQNGSMAVLAISEKGGLLHAPDIYMQKLAAPPQAKGKVHIDYPPEKNLKIIAESLDREISDLTVVVMDRKRHLDLIRQIREAGARVKLITDGDISAALSAGFNGTGIHALMGIGAAPEGVISAAALRCLGAHFQGRLIYDPEVVQAGTYLPPVEETRRELKEKGIEDPDKVWECEELASGKEVLFAATGITDGDLMRGVRFFGGGARTETLVISSQSRTVRFVDTIHMKDGQQPRGLQLR.

Residues Asp-33, Glu-57, Asp-97, and Glu-100 each coordinate Mn(2+). Residues 100–102 (EGT), Tyr-131, 176–178 (RKR), and 198–200 (DGD) each bind substrate. Residue Glu-225 coordinates Mn(2+).

The protein belongs to the FBPase class 2 family. Homotetramer. Mn(2+) serves as cofactor.

The catalysed reaction is beta-D-fructose 1,6-bisphosphate + H2O = beta-D-fructose 6-phosphate + phosphate. It carries out the reaction D-sedoheptulose 1,7-bisphosphate + H2O = D-sedoheptulose 7-phosphate + phosphate. It participates in carbohydrate biosynthesis; Calvin cycle. Its function is as follows. Catalyzes the hydrolysis of fructose 1,6-bisphosphate (Fru 1,6-P2) and sedoheptulose 1,7-bisphosphate (Sed 1,7-P2) to fructose 6-phosphate and sedoheptulose 7-phosphate, respectively. This is D-fructose 1,6-bisphosphatase class 2/sedoheptulose 1,7-bisphosphatase from Synechococcus sp. (strain JA-2-3B'a(2-13)) (Cyanobacteria bacterium Yellowstone B-Prime).